Reading from the N-terminus, the 265-residue chain is Small ribosomal subunit protein eS4 (265 aa).

The region spanning 42–104 is the S4 RNA-binding domain; it reads LPLILIIRNR…TGENYRLLYD (63 aa).

The protein belongs to the eukaryotic ribosomal protein eS4 family.

It is found in the cytoplasm. The chain is Small ribosomal subunit protein eS4 (RPS4) from Oryza sativa subsp. japonica (Rice).